The chain runs to 165 residues: Chorismate pyruvate-lyase (165 aa).

4 residues coordinate substrate: Met-35, Arg-77, Leu-115, and Glu-156.

Belongs to the UbiC family. In terms of assembly, monomer.

Its subcellular location is the cytoplasm. The enzyme catalyses chorismate = 4-hydroxybenzoate + pyruvate. Its pathway is cofactor biosynthesis; ubiquinone biosynthesis. In terms of biological role, removes the pyruvyl group from chorismate, with concomitant aromatization of the ring, to provide 4-hydroxybenzoate (4HB) for the ubiquinone pathway. The sequence is that of Chorismate pyruvate-lyase from Shigella boydii serotype 18 (strain CDC 3083-94 / BS512).